The sequence spans 191 residues: Ribosomal RNA small subunit methyltransferase G (191 aa).

S-adenosyl-L-methionine is bound by residues G62, F67, 111–112 (IE), and R124.

This sequence belongs to the methyltransferase superfamily. RNA methyltransferase RsmG family.

Its subcellular location is the cytoplasm. It catalyses the reaction guanosine(527) in 16S rRNA + S-adenosyl-L-methionine = N(7)-methylguanosine(527) in 16S rRNA + S-adenosyl-L-homocysteine. Functionally, specifically methylates the N7 position of guanine in position 527 of 16S rRNA. The protein is Ribosomal RNA small subunit methyltransferase G of Rickettsia akari (strain Hartford).